We begin with the raw amino-acid sequence, 370 residues long: High affinity iron permease ftrA (370 aa).

Helical transmembrane passes span 5-25, 52-72, 88-108, 148-168, 179-199, 206-226, and 293-313; these read VFAV…SIIV, VWWG…GMIG, LWEG…GAAL, AMFL…VVFI, AFPL…YLLY, SLQI…AGLF, and YGSV…FVAM. Residues 335-370 form a disordered region; the sequence is RKSAEPGNGEQDVEVSTIPSDLQTESKIPKSGASLV. Residues 351–360 are compositionally biased toward polar residues; the sequence is TIPSDLQTES.

It belongs to the oxidase-dependent Fe transporter (OFeT) (TC 9.A.10.1) family.

Its subcellular location is the cell membrane. High affinity iron permease; part of the reductive iron assimilatory system (RIA), a siderophore-independent high affinity iron uptake mechanism. The chain is High affinity iron permease ftrA from Aspergillus fumigatus (strain ATCC MYA-4609 / CBS 101355 / FGSC A1100 / Af293) (Neosartorya fumigata).